The primary structure comprises 465 residues: Cysteine--tRNA ligase (465 aa).

Residue Cys-30 participates in Zn(2+) binding. The 'HIGH' region signature appears at 32-42 (ITVYDYCHVGH). Zn(2+) contacts are provided by Cys-214, His-239, and Glu-243. The 'KMSKS' region motif lies at 271-275 (KMSKS). Residue Lys-274 coordinates ATP.

It belongs to the class-I aminoacyl-tRNA synthetase family. In terms of assembly, monomer. The cofactor is Zn(2+).

The protein resides in the cytoplasm. It carries out the reaction tRNA(Cys) + L-cysteine + ATP = L-cysteinyl-tRNA(Cys) + AMP + diphosphate. The polypeptide is Cysteine--tRNA ligase (Burkholderia vietnamiensis (strain G4 / LMG 22486) (Burkholderia cepacia (strain R1808))).